A 439-amino-acid chain; its full sequence is Methionine aminopeptidase 2-2 (439 aa).

Residues 1 to 90 (MAAQTTEKLD…RVPVSNLFPN (90 aa)) are disordered. Positions 28–41 (EAEEDSDDAQDEGA) are enriched in acidic residues. The segment covering 56–72 (KKKKKKKPKKKSKKKGG) has biased composition (basic residues). Residue His-196 participates in substrate binding. A divalent metal cation contacts are provided by Asp-216, Asp-227, and His-296. His-304 contacts substrate. Residues Glu-329 and Glu-424 each contribute to the a divalent metal cation site.

The protein belongs to the peptidase M24A family. Methionine aminopeptidase eukaryotic type 2 subfamily. Requires Co(2+) as cofactor. Zn(2+) is required as a cofactor. The cofactor is Mn(2+). It depends on Fe(2+) as a cofactor.

The protein resides in the cytoplasm. It catalyses the reaction Release of N-terminal amino acids, preferentially methionine, from peptides and arylamides.. Its function is as follows. Cotranslationally removes the N-terminal methionine from nascent proteins. The N-terminal methionine is often cleaved when the second residue in the primary sequence is small and uncharged (Met-Ala-, Cys, Gly, Pro, Ser, Thr, or Val). The polypeptide is Methionine aminopeptidase 2-2 (Penicillium rubens (strain ATCC 28089 / DSM 1075 / NRRL 1951 / Wisconsin 54-1255) (Penicillium chrysogenum)).